Consider the following 427-residue polypeptide: MSVSFENKETNRGVLTFTISQDQIKPELDRVFKSVKKSLNVPGFRKGHLPRPIFDKKFGEESLYQDVMNALLPNAYEAAVKEAGLEVVAQPKIDVTSMEKGQDWVIAAEVVTKPEVKLGDYKNLEVSVDVEKEVTDADVEERIERERNNLAELVIKEAAAENGDTVVIDFVGSIDGVEFDGGKGENFSLGLGSGQFIPGFEDQLVGHSAGETVDVIVTFPEDYQAEDLAGKEAKFVTTIHEVKAKEVPALDDELAKDIDEEVETLADLKEKYRKELAAAKEEAYKDAVEGAAIDTAVENAEIVELPEEMIHEEVHRSVNEFLGNLQRQGINPDMYFQITGTTQEDLHNQYQAEAESRTKTNLVIEAVAKAEGFDASEEEIQKEVEQLAADYNMEVAQVQSLLSADMLKHDITIKKAVELITSTATVK.

The 86-residue stretch at G163 to P248 folds into the PPIase FKBP-type domain.

It belongs to the FKBP-type PPIase family. Tig subfamily.

The protein localises to the cytoplasm. It catalyses the reaction [protein]-peptidylproline (omega=180) = [protein]-peptidylproline (omega=0). Functionally, involved in protein export. Acts as a chaperone by maintaining the newly synthesized protein in an open conformation. Functions as a peptidyl-prolyl cis-trans isomerase. This is Trigger factor from Streptococcus pneumoniae (strain ATCC 700669 / Spain 23F-1).